Reading from the N-terminus, the 217-residue chain is MDAPRRFPTLVQLMQPKAMPVEVLGHLPKRFSWFHSEFLKNPKVVRLEVWLVEKIFGRGGERIPHVQGMSQILIHVNRLDPNGEAEILVFGRPSYQEDTIKMIMNLADYHRQLQAKGSGKALAQDVATQKAETQRSSIEVREAGTQRSVEVREAGTQRSVEVQEVGTQGSPVEVQEAGTQQSLQAANKSGTQRSPEAASKAVTQRFREDARDPVTRL.

Residues 1–40 (MDAPRRFPTLVQLMQPKAMPVEVLGHLPKRFSWFHSEFLK) form an involved in RNA binding region. The KH; atypical domain maps to 40-103 (KNPKVVRLEV…SYQEDTIKMI (64 aa)). The disordered stretch occupies residues 129–217 (QKAETQRSSI…EDARDPVTRL (89 aa)). Positions 138-155 (IEVREAGTQRSVEVREAG) are enriched in basic and acidic residues. A phosphothreonine; by ATM mark is found at threonine 145 and threonine 156. Polar residues-rich tracts occupy residues 156-170 (TQRS…TQGS) and 177-194 (AGTQ…TQRS). Serine 182 is subject to Phosphoserine. A compositionally biased stretch (basic and acidic residues) spans 205 to 217 (RFREDARDPVTRL).

This sequence belongs to the KHDC1 family. In terms of assembly, component of the subcortical maternal complex (SCMC), at least composed of NLRP5, KHDC3L, OOEP, and TLE6 isoform 1. Within the complex, interacts with NLRP5, KHDC3L and TLE6 isoform 1. The SCMC may facilitate translocation of its components between the nuclear and cytoplasmic compartments. Forms a scaffold complex with OOEP/FLOPED, and interacts with BLM and TRIM25 at DNA replication forks. Interacts with PARP1; the interaction is increased following the formation of DNA double-strand breaks. Interacts with NUMA1. In terms of tissue distribution, expression appears to be maximal in germinal vesicle oocytes, it tails off through metaphase II oocytes and is undetectable following the completion of the oocyte to embryo transition.

Its subcellular location is the cytoplasm. It localises to the cell cortex. The protein localises to the nucleus. The protein resides in the mitochondrion. It is found in the cytoskeleton. Its subcellular location is the microtubule organizing center. It localises to the centrosome. The protein localises to the chromosome. In terms of biological role, component of the subcortical maternal complex (SCMC), a multiprotein complex that plays a key role in early embryonic development. The SCMC complex is a structural constituent of cytoplasmic lattices, which consist in fibrous structures found in the cytoplasm of oocytes and preimplantation embryos. They are required to store maternal proteins critical for embryonic development, such as proteins that control epigenetic reprogramming of the preimplantation embryo, and prevent their degradation or activation. KHDC3 ensures proper spindle assembly by regulating the localization of AURKA via RHOA signaling and of PLK1 via a RHOA-independent process. Required for the localization of MAD2L1 to kinetochores to enable spindle assembly checkpoint function. As part of the OOEP-KHDC3 scaffold, recruits BLM and TRIM25 to DNA replication forks, thereby promoting the ubiquitination of BLM by TRIM25, enhancing BLM retainment at replication forks and therefore promoting stalled replication fork restart. Regulates homologous recombination-mediated DNA repair via recruitment of RAD51 to sites of DNA double-strand breaks, and sustainment of PARP1 activity, which in turn modulates downstream ATM or ATR activation. Activation of ATM or ATR in response to DNA double-strand breaks may be cell-type specific. Its role in DNA double-strand break repair is independent of its role in restarting stalled replication forks. Promotes neural stem cell neurogenesis and neuronal differentiation in the hippocampus. May regulate normal development of learning, memory and anxiety. Capable of binding RNA. This is KH domain-containing protein 3 from Homo sapiens (Human).